The following is a 224-amino-acid chain: Jacalin-related lectin 24 (224 aa).

A Jacalin-type lectin domain is found at 8–160 (MFKVGPIGSK…LTSIGIYVYP (153 aa)).

It belongs to the jacalin lectin family.

The chain is Jacalin-related lectin 24 (JAL24) from Arabidopsis thaliana (Mouse-ear cress).